Reading from the N-terminus, the 182-residue chain is Dual-action ribosomal maturation protein DarP (182 aa).

It belongs to the DarP family.

It localises to the cytoplasm. Its function is as follows. Member of a network of 50S ribosomal subunit biogenesis factors which assembles along the 30S-50S interface, preventing incorrect 23S rRNA structures from forming. Promotes peptidyl transferase center (PTC) maturation. The chain is Dual-action ribosomal maturation protein DarP from Serratia proteamaculans (strain 568).